The chain runs to 315 residues: p-hydroxyphenylacetate 3-hydroxylase, reductase component (315 aa).

It belongs to the non-flavoprotein flavin reductase family. Homodimer. The p-hydroxyphenylacetate 3-hydroxylase (HpaH) is composed of an oxygenase component C2 and a reductase component C1.

The catalysed reaction is a reduced flavin + NAD(+) = an oxidized flavin + NADH + 2 H(+). It participates in aromatic compound metabolism; 4-hydroxyphenylacetate degradation; pyruvate and succinate semialdehyde from 4-hydroxyphenylacetate: step 1/7. Flavin concentrations greater than 15 uM do not inhibit the NADH oxidation activity of the reductase component C1 but do affect the hydroxylation activity of the C1-C2 complex. Maximal reductase activity is achieved only upon HPA binding to the reductase component C1 before interaction with NADH. HPA stimulates the rates of both the reduction of FMN and release of reduced FMN from the reductase component. In terms of biological role, reductase component of a two-component system that supplies reduced FMN (FMNH2) to the oxygenase component to catalyze the hydroxylation of 4-hydroxyphenylacetic acid, leading to the production of 3,4-dihydroxyphenylacetate (3,4-DHPA). Catalyzes the reduction of free flavins (FMN, FAD and riboflavin) by NADH. Subsequently, the reduced flavins diffuse to the oxygenase component C2. The sequence is that of p-hydroxyphenylacetate 3-hydroxylase, reductase component from Acinetobacter baumannii.